Reading from the N-terminus, the 109-residue chain is Ubiquitin-related modifier 1 homolog (109 aa).

The residue at position 109 (Gly-109) is a 1-thioglycine. A Glycyl lysine isopeptide (Gly-Lys) (interchain with K-? in acceptor proteins) cross-link involves residue Gly-109.

Belongs to the URM1 family. In terms of processing, C-terminal thiocarboxylation occurs in 2 steps, it is first acyl-adenylated (-COAMP) via the hesA/moeB/thiF part of the MOCS3 homolog, then thiocarboxylated (-COSH) via the rhodanese domain of the MOCS3 homolog.

The protein resides in the cytoplasm. It participates in tRNA modification; 5-methoxycarbonylmethyl-2-thiouridine-tRNA biosynthesis. Functionally, acts as a sulfur carrier required for 2-thiolation of mcm(5)S(2)U at tRNA wobble positions of cytosolic tRNA(Lys), tRNA(Glu) and tRNA(Gln). Serves as sulfur donor in tRNA 2-thiolation reaction by being thiocarboxylated (-COSH) at its C-terminus by MOCS3. The sulfur is then transferred to tRNA to form 2-thiolation of mcm(5)S(2)U. Also acts as a ubiquitin-like protein (UBL) that is covalently conjugated via an isopeptide bond to lysine residues of target proteins. The thiocarboxylated form serves as substrate for conjugation and oxidative stress specifically induces the formation of UBL-protein conjugates. This is Ubiquitin-related modifier 1 homolog from Anopheles gambiae (African malaria mosquito).